The following is a 186-amino-acid chain: Ribosome-recycling factor (186 aa).

Positions Glu144 to Lys163 are disordered.

Belongs to the RRF family.

It is found in the cytoplasm. Responsible for the release of ribosomes from messenger RNA at the termination of protein biosynthesis. May increase the efficiency of translation by recycling ribosomes from one round of translation to another. In Rhizobium etli (strain CIAT 652), this protein is Ribosome-recycling factor.